The chain runs to 144 residues: HMG1/2-like protein (144 aa).

Disordered regions lie at residues 1–42 and 85–144; these read MKGG…PPSA and PFIS…EDDD. Composition is skewed to basic and acidic residues over residues 8-35 and 89-99; these read AKSDNKLAVKKQAADTKKTKKAVKDPNK and KAEKRKQEYEK. Positions 36 to 105 form a DNA-binding region, HMG box; sequence PKRPPSAFFV…EYEKNLQAYN (70 aa). The span at 126–144 shows a compositional bias: acidic residues; the sequence is NDDDEDQDGSGEDDSEDDD.

This sequence belongs to the HMGB family. In terms of tissue distribution, expressed at higher levels in dark-grown tissues, such as roots; and at lower levels in light-grown tissues, such as cotyledons and stems.

It is found in the nucleus. The protein is HMG1/2-like protein of Ipomoea nil (Japanese morning glory).